Here is a 999-residue protein sequence, read N- to C-terminus: Desmoglein-3 (999 aa).

A signal peptide spans 1–23; sequence MMGLFPRTTGALAIFVVVILVHG. The propeptide occupies 24 to 49; that stretch reads ELRIETKGQYDEEEMTMQQAKRRQKR. Cadherin domains lie at 50–158, 159–268, 269–383, and 386–499; these read EWVK…PVFS, QQIF…PMFR, DSQY…GIAF, and ASKT…VLEK. Residues 50–615 lie on the Extracellular side of the membrane; that stretch reads EWVKFAKPCR…TRYGRPHSGR (566 aa). Asparagine 110 and asparagine 180 each carry an N-linked (GlcNAc...) asparagine glycan. 2 N-linked (GlcNAc...) asparagine glycosylation sites follow: asparagine 459 and asparagine 545. A helical transmembrane segment spans residues 616–640; it reads LGPAAIGLLLLGLLLLLLAPLLLLT. Residues 641–999 are Cytoplasmic-facing; it reads CDCGAGSTGG…CTEDPCSRLI (359 aa). Residues 642–714 form a required for interaction with CTNND1 and localization at cell-cell junctions region; it reads DCGAGSTGGV…NTYARGTAVE (73 aa). 2 Desmoglein repeat repeats span residues 910 to 935 and 936 to 966; these read LSTS…LVTE and TYSA…ERVI.

In terms of assembly, homodimer. Part of a complex that contains DSG3, PKP1, YAP1 and YWHAG; the complex is required for localization of DSG3 and YAP1 to the cell membrane in keratinocytes. Interacts with PKP2. Interacts with CTNND1; the interaction facilitates DSG3 localization and retention at cell-cell junctions. Interacts with CDH1; the interaction is required for CDH1 localization to developing adherens junctions. Interacts with RAC1; the interaction is required for DSG3 translocation to cell-cell junctions, organization of cortical F-actin bundles and actin anchoring at cell-cell junctions. Interacts with DSC3; the interaction may limit the interaction of DSC3 with p38MAPK family members and therefore repress p38MAPK signaling activation. Expressed throughout the basal and spinous layer of the epidermis with weak expression in the granular layer (at protein level). Expressed in skin and mucosa (at protein level). Expressed in the basal layer of the outer root sheath of the telogen hair club, specifically at the cell membrane between the apex of the cells and the surrounding hair club (at protein level). Expression is less abundant between the lateral margins of the outer root sheath basal cells (at protein level). Also expressed in the tongue, tonsil and esophagus.

It localises to the cell membrane. Its subcellular location is the cell junction. The protein localises to the desmosome. It is found in the cytoplasm. The protein resides in the tight junction. Its function is as follows. A component of desmosome cell-cell junctions which are required for positive regulation of cellular adhesion. Required for adherens and desmosome junction assembly in response to mechanical force in keratinocytes. Required for desmosome-mediated cell-cell adhesion of cells surrounding the telogen hair club and the basal layer of the outer root sheath epithelium, consequently is essential for the anchoring of telogen hairs in the hair follicle. Required for the maintenance of the epithelial barrier via promoting desmosome-mediated intercellular attachment of suprabasal epithelium to basal cells. May play a role in the protein stability of the desmosome plaque components DSP, JUP, PKP1, PKP2 and PKP3. Required for YAP1 localization at the plasma membrane in keratinocytes in response to mechanical strain, via the formation of an interaction complex composed of DSG3, PKP1 and YWHAG. May also be involved in the positive regulation of YAP1 target gene transcription and as a result cell proliferation. Positively regulates cellular contractility and cell junction formation via organization of cortical F-actin bundles and anchoring of actin to tight junctions, in conjunction with RAC1. The cytoplasmic pool of DSG3 is required for the localization of CDH1 and CTNNB1 at developing adherens junctions, potentially via modulation of SRC activity. Inhibits keratinocyte migration via suppression of p38MAPK signaling, may therefore play a role in moderating wound healing. The protein is Desmoglein-3 of Homo sapiens (Human).